The sequence spans 263 residues: Purine nucleoside phosphorylase SACOL1200 (263 aa).

Zn(2+) contacts are provided by His-79, Cys-124, and His-141.

It belongs to the purine nucleoside phosphorylase YfiH/LACC1 family. Homodimer. Requires Cu(2+) as cofactor. It depends on Zn(2+) as a cofactor.

The enzyme catalyses adenosine + phosphate = alpha-D-ribose 1-phosphate + adenine. The catalysed reaction is S-methyl-5'-thioadenosine + phosphate = 5-(methylsulfanyl)-alpha-D-ribose 1-phosphate + adenine. It carries out the reaction inosine + phosphate = alpha-D-ribose 1-phosphate + hypoxanthine. It catalyses the reaction adenosine + H2O + H(+) = inosine + NH4(+). In terms of biological role, purine nucleoside enzyme that catalyzes the phosphorolysis of adenosine and inosine nucleosides, yielding D-ribose 1-phosphate and the respective free bases, adenine and hypoxanthine. Also catalyzes the phosphorolysis of S-methyl-5'-thioadenosine into adenine and S-methyl-5-thio-alpha-D-ribose 1-phosphate. Also has adenosine deaminase activity. The chain is Purine nucleoside phosphorylase SACOL1200 from Staphylococcus aureus (strain COL).